Consider the following 230-residue polypeptide: Cytochrome c oxidase subunit 2 (230 aa).

The Mitochondrial intermembrane segment spans residues 1 to 14; sequence MAHPSQLGFQDAAS. The helical transmembrane segment at 15 to 45 threads the bilayer; sequence PVMEELLHFHDHALMIVFLISTLVLYIIVAM. Residues 46–59 are Mitochondrial matrix-facing; sequence VSTKLTNKYILDSQ. The helical transmembrane segment at 60-87 threads the bilayer; the sequence is EIEIIWTVLPAVILILIALPSLRILYLM. Topologically, residues 88-230 are mitochondrial intermembrane; the sequence is DEINDPHLTI…SWSSLMLEDA (143 aa). Cu cation is bound by residues His161, Cys196, Glu198, Cys200, His204, and Met207. Glu198 contacts Mg(2+).

This sequence belongs to the cytochrome c oxidase subunit 2 family. Component of the cytochrome c oxidase (complex IV, CIV), a multisubunit enzyme composed of 14 subunits. The complex is composed of a catalytic core of 3 subunits MT-CO1, MT-CO2 and MT-CO3, encoded in the mitochondrial DNA, and 11 supernumerary subunits COX4I, COX5A, COX5B, COX6A, COX6B, COX6C, COX7A, COX7B, COX7C, COX8 and NDUFA4, which are encoded in the nuclear genome. The complex exists as a monomer or a dimer and forms supercomplexes (SCs) in the inner mitochondrial membrane with NADH-ubiquinone oxidoreductase (complex I, CI) and ubiquinol-cytochrome c oxidoreductase (cytochrome b-c1 complex, complex III, CIII), resulting in different assemblies (supercomplex SCI(1)III(2)IV(1) and megacomplex MCI(2)III(2)IV(2)). Found in a complex with TMEM177, COA6, COX18, COX20, SCO1 and SCO2. Interacts with TMEM177 in a COX20-dependent manner. Interacts with COX20. Interacts with COX16. Cu cation is required as a cofactor.

It is found in the mitochondrion inner membrane. It carries out the reaction 4 Fe(II)-[cytochrome c] + O2 + 8 H(+)(in) = 4 Fe(III)-[cytochrome c] + 2 H2O + 4 H(+)(out). Functionally, component of the cytochrome c oxidase, the last enzyme in the mitochondrial electron transport chain which drives oxidative phosphorylation. The respiratory chain contains 3 multisubunit complexes succinate dehydrogenase (complex II, CII), ubiquinol-cytochrome c oxidoreductase (cytochrome b-c1 complex, complex III, CIII) and cytochrome c oxidase (complex IV, CIV), that cooperate to transfer electrons derived from NADH and succinate to molecular oxygen, creating an electrochemical gradient over the inner membrane that drives transmembrane transport and the ATP synthase. Cytochrome c oxidase is the component of the respiratory chain that catalyzes the reduction of oxygen to water. Electrons originating from reduced cytochrome c in the intermembrane space (IMS) are transferred via the dinuclear copper A center (CU(A)) of subunit 2 and heme A of subunit 1 to the active site in subunit 1, a binuclear center (BNC) formed by heme A3 and copper B (CU(B)). The BNC reduces molecular oxygen to 2 water molecules using 4 electrons from cytochrome c in the IMS and 4 protons from the mitochondrial matrix. The sequence is that of Cytochrome c oxidase subunit 2 (mt-co2) from Gadus morhua (Atlantic cod).